A 350-amino-acid polypeptide reads, in one-letter code: Phosphotriesterase-related protein (350 aa).

The a divalent metal cation site is built by histidine 22, histidine 24, glutamate 169, histidine 201, histidine 230, and aspartate 298.

The protein belongs to the metallo-dependent hydrolases superfamily. Phosphotriesterase family. A divalent metal cation is required as a cofactor.

This is Phosphotriesterase-related protein from Drosophila erecta (Fruit fly).